The following is an 81-amino-acid chain: Protein K6 (81 aa).

This sequence belongs to the poxviridae K6 protein family.

In Homo sapiens (Human), this protein is Protein K6.